The chain runs to 494 residues: Tetracenomycin biosynthesis bifunctional cyclase/O-methyl transferase TcmN (494 aa).

Positions 11–140 are polyketide cyclase; the sequence is VNAPFELVWD…TTTRANMERI (130 aa). The active-site Proton acceptor; for cyclase activity is the serine 67. Active-site proton donor; for cyclase activity residues include arginine 69 and arginine 82. A methyltransferase region spans residues 169–494; that stretch reads LLLAASGRLA…TWTTLECRPV (326 aa). S-adenosyl-L-methionine is bound by residues aspartate 358 and 384 to 386; that span reads GDF. Histidine 405 serves as the catalytic Proton acceptor; for methyltransferase activity.

In the C-terminal section; belongs to the class I-like SAM-binding methyltransferase superfamily. Cation-independent O-methyltransferase family. The tetracenomycin polyketide synthase (TCM PKS) is composed of a ketosynthase complex (TcmKL), an acyl carrier protein (TcmM), a cyclase (TcmN) and a probable second cyclase (TcmJ). TcmN is a homodimer in solution.

It carries out the reaction 10 malonyl-CoA + 8 H(+) = tetracenomycin F2 + 10 CO2 + 10 CoA + 2 H2O. It functions in the pathway antibiotic biosynthesis; tetracenomycin C biosynthesis. Involved in the biosynthesis of tetracenomycin C (TCM C). Part of a type II polyketide synthase (PKS) that catalyzes the synthesis of tetracenomycin F2 (TCM F2), a precursor of TCM C, from malonyl-CoA. The TcmN N-terminal domain, when coupled with the other components of the PKS, catalyzes the cyclization and aromatization of the linear polyketide intermediate. Catalyzes the cyclization of the first and second rings. In addition, the C-terminal domain acts as a methyltransferase. It catalyzes the specific O-methylation of tetracenomycin D3 (TCM D3) to TCM B3, using S-adenosyl-L-methionine as the methyl donor. The protein is Tetracenomycin biosynthesis bifunctional cyclase/O-methyl transferase TcmN of Streptomyces glaucescens.